The chain runs to 341 residues: S-adenosylmethionine:tRNA ribosyltransferase-isomerase (341 aa).

The protein belongs to the QueA family. In terms of assembly, monomer.

The protein resides in the cytoplasm. The enzyme catalyses 7-aminomethyl-7-carbaguanosine(34) in tRNA + S-adenosyl-L-methionine = epoxyqueuosine(34) in tRNA + adenine + L-methionine + 2 H(+). It participates in tRNA modification; tRNA-queuosine biosynthesis. In terms of biological role, transfers and isomerizes the ribose moiety from AdoMet to the 7-aminomethyl group of 7-deazaguanine (preQ1-tRNA) to give epoxyqueuosine (oQ-tRNA). The sequence is that of S-adenosylmethionine:tRNA ribosyltransferase-isomerase from Chlorobium phaeobacteroides (strain DSM 266 / SMG 266 / 2430).